The chain runs to 706 residues: Choline transporter-like protein 2 (706 aa).

At 1–32 the chain is on the cytoplasmic side; sequence MMELEGEKPNYGEPRKYDPTFKGPIYNRGCTD. The chain crosses the membrane as a helical span at residues 33-53; that stretch reads IVCCIFFIICILGYVAVGILA. At 54–232 the chain is on the extracellular side; the sequence is WSQGDPRKVI…KIFEDYTQSW (179 aa). Residues N187 and N210 are each glycosylated (N-linked (GlcNAc...) asparagine). Residues 233–253 traverse the membrane as a helical segment; the sequence is YWILIGLVIAMLISLLFIVLL. Residues 254–256 lie on the Cytoplasmic side of the membrane; the sequence is RFL. The helical transmembrane segment at 257–277 threads the bilayer; sequence AGIMVWVMIVMVILVIGYGIF. The Extracellular segment spans residues 278 to 315; the sequence is HCSMEYVSLKSEAGSNVTLKDLGFQTDFSVYLHIRQTW. A glycan (N-linked (GlcNAc...) asparagine) is linked at N293. A helical transmembrane segment spans residues 316–336; it reads LAFIIILAIVEVVIILLLIFL. Residues 337-364 lie on the Cytoplasmic side of the membrane; the sequence is RNRILIAIALIKEASRAIGYVMSALFYP. The helical transmembrane segment at 365 to 385 threads the bilayer; sequence LFTFALLSIVIAYWAVTAVFL. The Extracellular portion of the chain corresponds to 386–454; the sequence is STSNQPIYKV…LQFYNVFLFF (69 aa). N397 and N412 each carry an N-linked (GlcNAc...) asparagine glycan. Residues 455–477 traverse the membrane as a helical segment; that stretch reads WCANFVTALGQMTLAGAFASYYW. Residues 478–504 lie on the Cytoplasmic side of the membrane; the sequence is ALVKPDDMPAFPIFSSLGRSLRYHTGS. The chain crosses the membrane as a helical span at residues 505–525; the sequence is LAFGSLILSIIQIIRVLLEYI. Over 526–599 the chain is Extracellular; the sequence is DHKLQGTQNK…RVAVLDKVTD (74 aa). The chain crosses the membrane as a helical span at residues 600 to 620; sequence FLLFLGKLLIVGLVGIFAFFF. At 621-638 the chain is on the cytoplasmic side; the sequence is FSGRVKAFENTAPNLHYY. Residues 639-659 traverse the membrane as a helical segment; sequence WVPILTVVVGSYLIAHGFFSV. Over 660 to 706 the chain is Extracellular; it reads YAMCVDTLFLCFLEDLERNDGSAERPYLMSDRLLKVLNKKNKPEPAE.

This sequence belongs to the CTL (choline transporter-like) family.

It is found in the cell membrane. It localises to the mitochondrion outer membrane. The enzyme catalyses choline(out) + n H(+)(in) = choline(in) + n H(+)(out). The catalysed reaction is ethanolamine(out) + n H(+)(in) = ethanolamine(in) + n H(+)(out). In terms of biological role, choline/H+ antiporter, mainly in mitochodria. Also acts as a low-affinity ethanolamine/H+ antiporter, regulating the supply of extracellular ethanolamine (Etn) for the CDP-Etn pathway, redistribute intracellular Etn and balance the CDP-Cho and CDP-Etn arms of the Kennedy pathway. This chain is Choline transporter-like protein 2 (slc44a2), found in Salmo salar (Atlantic salmon).